The sequence spans 103 residues: UPF0145 protein PERMA_0324 (103 aa).

The protein belongs to the UPF0145 family.

The polypeptide is UPF0145 protein PERMA_0324 (Persephonella marina (strain DSM 14350 / EX-H1)).